The following is a 99-amino-acid chain: DNA-directed RNA polymerase subunit omega (99 aa).

Belongs to the RNA polymerase subunit omega family. As to quaternary structure, the RNAP catalytic core consists of 2 alpha, 1 beta, 1 beta' and 1 omega subunit. When a sigma factor is associated with the core the holoenzyme is formed, which can initiate transcription.

The enzyme catalyses RNA(n) + a ribonucleoside 5'-triphosphate = RNA(n+1) + diphosphate. In terms of biological role, promotes RNA polymerase assembly. Latches the N- and C-terminal regions of the beta' subunit thereby facilitating its interaction with the beta and alpha subunits. The protein is DNA-directed RNA polymerase subunit omega of Thermus thermophilus (strain ATCC BAA-163 / DSM 7039 / HB27).